The chain runs to 347 residues: NADH-ubiquinone oxidoreductase chain 2 (347 aa).

The next 11 membrane-spanning stretches (helical) occupy residues 2–22 (LSPL…LVTF), 26–46 (SWIL…PLMA), 60–80 (YFIA…LAAW), 94–114 (IILN…PMHF), 127–147 (TGMI…IQIA), 151–171 (NNAF…WGGL), 179–197 (IIAY…MAPF), 201–223 (ITWV…LNTL), 242–262 (MLLL…GFTN), 274–294 (NLVI…FFYT), and 325–345 (LMTM…AIFI).

The protein belongs to the complex I subunit 2 family.

The protein resides in the mitochondrion inner membrane. The catalysed reaction is a ubiquinone + NADH + 5 H(+)(in) = a ubiquinol + NAD(+) + 4 H(+)(out). Functionally, core subunit of the mitochondrial membrane respiratory chain NADH dehydrogenase (Complex I) that is believed to belong to the minimal assembly required for catalysis. Complex I functions in the transfer of electrons from NADH to the respiratory chain. The immediate electron acceptor for the enzyme is believed to be ubiquinone. In Lampetra fluviatilis (European river lamprey), this protein is NADH-ubiquinone oxidoreductase chain 2 (MT-ND2).